The chain runs to 87 residues: Type 3 secretion system needle filament protein (87 aa).

It belongs to the SctF family. The core secretion machinery of the T3SS is composed of approximately 20 different proteins, including cytoplasmic components, a base, an export apparatus and a needle. This subunit polymerizes and forms the helical needle filament. Forms high-order oligomers in vitro. Forms a stable ternary complex with the YscE-YscG chaperone. Interacts directly with YscG but makes very little direct contact with YscE. Interacts with the needle adapter protein YscI/SctI.

The protein localises to the secreted. It localises to the cell surface. With respect to regulation, the secretion and/or polymerization may be controlled by the type III secretion system regulator YopR. Interaction with YscE-YscG chaperone prevents premature polymerization of YscF/SctF in the bacterial cytosol and is required for its stability and efficient secretion. Interaction with the needle adapter protein YscI/SctI is required for YscF/SctF secretion, needle assembly and Yop secretion. The N-terminus varies among bacterial species, not only in amino acid composition but also in the number of amino acids, and may function in manipulating the host response to the advantage of the bacteria. In Y.pestis, the N-terminus can function to decrease cytokine induction, perhaps contributing to a favorable immune environment leading to survival of Y.pestis within the eukaryotic host. Component of the type III secretion system (T3SS), also called injectisome, which is used to inject bacterial effector proteins into eukaryotic host cells. YscF/SctF forms the external needle filament that protrudes from the bacterial surface. Essential for the calcium-dependent regulation of T3SS and Yop secretion. Required to block Yop secretion in the presence of extracellular calcium. May be the extracellular T3SS component that senses extracellular calcium and/or participates in transmitting the calcium signal to the cytoplasmic compartment where the block in secretion is initiated. Functionally, during infection, can induce innate immune responses. The needle proteins interact with host TLR2 or TLR4, and induce signaling by NF-kappa-B and/or AP-1. This activation is MyD88 dependent and results in increased expression of cytokines, including TNF-alpha, IL-6 and IL-8. Innate immune responses are modulated by the N-terminal region of YscF/SctF. This chain is Type 3 secretion system needle filament protein, found in Yersinia pestis.